Consider the following 218-residue polypeptide: Large ribosomal subunit protein bL25 (218 aa).

A disordered region spans residues 187-218 (SATAAVEEAKEDGAPEESAQGQGAAEAQETNK). The segment covering 202 to 218 (EESAQGQGAAEAQETNK) has biased composition (low complexity).

It belongs to the bacterial ribosomal protein bL25 family. CTC subfamily. As to quaternary structure, part of the 50S ribosomal subunit; part of the 5S rRNA/L5/L18/L25 subcomplex. Contacts the 5S rRNA. Binds to the 5S rRNA independently of L5 and L18.

In terms of biological role, this is one of the proteins that binds to the 5S RNA in the ribosome where it forms part of the central protuberance. The polypeptide is Large ribosomal subunit protein bL25 (Anaplasma marginale (strain St. Maries)).